Reading from the N-terminus, the 252-residue chain is 3-dehydroquinate dehydratase (252 aa).

Residues S21, 46–48 (EWR), and R82 each bind 3-dehydroquinate. H143 acts as the Proton donor/acceptor in catalysis. K170 functions as the Schiff-base intermediate with substrate in the catalytic mechanism. Positions 213, 232, and 236 each coordinate 3-dehydroquinate.

This sequence belongs to the type-I 3-dehydroquinase family. Homodimer.

It catalyses the reaction 3-dehydroquinate = 3-dehydroshikimate + H2O. The protein operates within metabolic intermediate biosynthesis; chorismate biosynthesis; chorismate from D-erythrose 4-phosphate and phosphoenolpyruvate: step 3/7. Involved in the third step of the chorismate pathway, which leads to the biosynthesis of aromatic amino acids. Catalyzes the cis-dehydration of 3-dehydroquinate (DHQ) and introduces the first double bond of the aromatic ring to yield 3-dehydroshikimate. The protein is 3-dehydroquinate dehydratase of Salmonella dublin (strain CT_02021853).